A 173-amino-acid chain; its full sequence is Cell division protein SepF (173 aa).

Positions 31 to 82 (FEDFDEPLDERPSRNRSPRDDSRNNAVTDSSDHSPSRNERRSPAPAPATADL) are disordered. Composition is skewed to basic and acidic residues over residues 39 to 53 (DERPSRNRSPRDDSR) and 60 to 72 (SSDHSPSRNERRS).

It belongs to the SepF family. Homodimer. Interacts with FtsZ.

It localises to the cytoplasm. In terms of biological role, cell division protein that is part of the divisome complex and is recruited early to the Z-ring. Probably stimulates Z-ring formation, perhaps through the cross-linking of FtsZ protofilaments. Its function overlaps with FtsA. The polypeptide is Cell division protein SepF (Thermobifida fusca (strain YX)).